The primary structure comprises 230 residues: Ribonuclease 3 (230 aa).

One can recognise an RNase III domain in the interval 5 to 125 (YSRLYKILGY…IIGAIYLDSD (121 aa)). Position 40 (E40) interacts with Mg(2+). D44 is an active-site residue. Mg(2+)-binding residues include D111 and E114. E114 is a catalytic residue. Residues 153 to 223 (DSKSKLQEIL…AEKMIQILSQ (71 aa)) form the DRBM domain.

It belongs to the ribonuclease III family. As to quaternary structure, homodimer. Mg(2+) is required as a cofactor.

Its subcellular location is the cytoplasm. The enzyme catalyses Endonucleolytic cleavage to 5'-phosphomonoester.. In terms of biological role, digests double-stranded RNA. Involved in the processing of primary rRNA transcript to yield the immediate precursors to the large and small rRNAs (23S and 16S). Processes some mRNAs, and tRNAs when they are encoded in the rRNA operon. Processes pre-crRNA and tracrRNA of type II CRISPR loci if present in the organism. The sequence is that of Ribonuclease 3 from Francisella philomiragia subsp. philomiragia (strain ATCC 25017 / CCUG 19701 / FSC 153 / O#319-036).